We begin with the raw amino-acid sequence, 846 residues long: Enhancer of polycomb-like protein 1 (846 aa).

Disordered stretches follow at residues 169–204 (FNSK…KGDA), 391–466 (TSDE…APDA), 587–609 (EKKR…PKAM), 682–702 (AADA…PQPN), and 759–804 (QVQA…GVKQ). The span at 180 to 203 (VKSDKEQGRGMRVKGKDREKEKGD) shows a compositional bias: basic and acidic residues. Positions 411–426 (PSLSGQTPLTSGQSSS) are enriched in polar residues. Basic and acidic residues predominate over residues 432-452 (TDKDREERAQRERYDAQRNAE). The stretch at 434–490 (KDREERAQRERYDAQRNAERSGILSGRSNAPDALKERLQALQQKTEEMLARKKEQDA) forms a coiled coil. Residues 686-702 (KPPPAPIFQKPPAPQPN) are compositionally biased toward pro residues. Residues 759–773 (QVQAQGQGHPQAHLQ) are compositionally biased toward low complexity. Positions 774-796 (THPQGVSQPNGVNSPMPNGQQML) are enriched in polar residues.

The protein belongs to the enhancer of polycomb family. In terms of assembly, component of the NuA4 histone acetyltransferase complex.

It is found in the nucleus. Its function is as follows. Component of the NuA4 histone acetyltransferase complex which is involved in transcriptional activation of selected genes principally by acetylation of nucleosomal histone H4 and H2A. The NuA4 complex is also involved in DNA repair. Involved in gene silencing by neighboring heterochromatin, blockage of the silencing spreading along the chromosome, and required for cell cycle progression through G2/M. This chain is Enhancer of polycomb-like protein 1 (EPL1), found in Cryptococcus neoformans var. neoformans serotype D (strain B-3501A) (Filobasidiella neoformans).